The sequence spans 485 residues: 3-isopropylmalate dehydratase large subunit (485 aa).

Disordered regions lie at residues 1-20 and 73-92; these read MSDA…QSTG and PERT…RSLP. 3 residues coordinate [4Fe-4S] cluster: C364, C424, and C427.

Belongs to the aconitase/IPM isomerase family. LeuC type 1 subfamily. As to quaternary structure, heterodimer of LeuC and LeuD. It depends on [4Fe-4S] cluster as a cofactor.

It catalyses the reaction (2R,3S)-3-isopropylmalate = (2S)-2-isopropylmalate. It functions in the pathway amino-acid biosynthesis; L-leucine biosynthesis; L-leucine from 3-methyl-2-oxobutanoate: step 2/4. Its function is as follows. Catalyzes the isomerization between 2-isopropylmalate and 3-isopropylmalate, via the formation of 2-isopropylmaleate. This chain is 3-isopropylmalate dehydratase large subunit, found in Rhodopirellula baltica (strain DSM 10527 / NCIMB 13988 / SH1).